The following is a 706-amino-acid chain: Serine/threonine-protein kinase BUR1 (706 aa).

One can recognise a Protein kinase domain in the interval 38-339; the sequence is YKPLGKIGEG…AIGGKNHAYF (302 aa). ATP is bound by residues 44-52 and Lys-67; that span reads IGEGTFGEV. Residue Asp-168 is the Proton acceptor of the active site. Basic and acidic residues-rich tracts occupy residues 360 to 523, 545 to 570, and 594 to 623; these read LDNH…RDSR, DYDR…DMTR, and DKVE…KSRD. A disordered region spans residues 360–706; it reads LDNHKRREQE…YGRKRPRIER (347 aa). Residues 625–648 show a composition bias toward pro residues; it reads GPPPGPPLPADGPPPPPSSNPPRP. Residues 659-706 are compositionally biased toward basic and acidic residues; the sequence is WRRDSRDRRESRDRDGRDRDGRDRRLSSSRYARDEFDEYGRKRPRIER.

Belongs to the protein kinase superfamily. CMGC Ser/Thr protein kinase family. CDC2/CDKX subfamily.

Its subcellular location is the nucleus. It catalyses the reaction L-seryl-[protein] + ATP = O-phospho-L-seryl-[protein] + ADP + H(+). The enzyme catalyses L-threonyl-[protein] + ATP = O-phospho-L-threonyl-[protein] + ADP + H(+). The catalysed reaction is [DNA-directed RNA polymerase] + ATP = phospho-[DNA-directed RNA polymerase] + ADP + H(+). Functionally, serine/threonine-protein kinase involved in transcription regulation. Phosphorylates the UBC2/RAD6 ubiquitin-conjugating enzyme (E2), leading to monoubiquitination of histone H2B and the silencing of telomeric-associated genes. Also required for histone H3 methylation. Necessary for the recovery from pheromone-induced growth arrest in the cell cycle G1 phase. The polypeptide is Serine/threonine-protein kinase BUR1 (BUR1) (Yarrowia lipolytica (strain CLIB 122 / E 150) (Yeast)).